Reading from the N-terminus, the 183-residue chain is Peptide deformylase (183 aa).

The Fe cation site is built by Cys90 and His132. Glu133 is an active-site residue. His136 is a Fe cation binding site.

It belongs to the polypeptide deformylase family. The cofactor is Fe(2+).

It catalyses the reaction N-terminal N-formyl-L-methionyl-[peptide] + H2O = N-terminal L-methionyl-[peptide] + formate. Functionally, removes the formyl group from the N-terminal Met of newly synthesized proteins. Requires at least a dipeptide for an efficient rate of reaction. N-terminal L-methionine is a prerequisite for activity but the enzyme has broad specificity at other positions. This Parafrankia sp. (strain EAN1pec) protein is Peptide deformylase.